Consider the following 974-residue polypeptide: Villin-4 (974 aa).

Gelsolin-like repeat units lie at residues 29 to 79 (FIPT…DEAG), 150 to 190 (VHVK…QERA), 262 to 305 (GQAN…DDRK), 394 to 451 (LQVW…EERG), 532 to 572 (MQAI…TDQE), and 634 to 675 (LKVT…KNKL). Residues 738-783 (VKNGGTPVADKPKRRTPASYGGRASVPDKSQQRSRSMSFSPDRVRV) form a disordered region. Serine 777 and serine 787 each carry phosphoserine. 2 disordered regions span residues 801–833 (NARN…APKS) and 845–930 (KIPP…PVSD). The segment covering 824-833 (SSKFAPAPKS) has biased composition (low complexity). The segment covering 872–887 (NSKEQEEKKENDKEEG) has biased composition (basic and acidic residues). A compositionally biased stretch (polar residues) spans 888 to 898 (SMSSRIESLTI). At serine 890 the chain carries Phosphoserine. The region spanning 909-974 (EEDLPAHPYD…NKFKMAVQLF (66 aa)) is the HP domain. Positions 912 to 921 (LPAHPYDRLK) are enriched in basic and acidic residues.

It belongs to the villin/gelsolin family. Preferentially expressed in vegetative tissues. Detected in the whole seedling, hypocotyl, cotyledon, primary root, roots hair cells and trichomes. Expressed in flowers but not in the silique.

It is found in the cytoplasm. It localises to the cytoskeleton. Binds actin and actin filament bundles in a Ca(2+)-insensitive manner, but caps the barbed end of actin filaments and is able to sever them in a calcium-dependent manner. Involved in root hair growth through regulating actin organization in a Ca(2+)-dependent manner. The protein is Villin-4 of Arabidopsis thaliana (Mouse-ear cress).